Consider the following 1053-residue polypeptide: Sal-like protein 4 (1053 aa).

Residues Met-1–Thr-62 form a disordered region. Low complexity predominate over residues Glu-20–Pro-46. Ser-57 carries the phosphoserine modification. The segment at His-72–Cys-94 adopts a C2H2-type 1; atypical zinc-finger fold. The segment at Ser-116–Ala-149 is disordered. Residues Lys-130 to Ala-149 show a composition bias toward basic and acidic residues. Lys-156 participates in a covalent cross-link: Glycyl lysine isopeptide (Lys-Gly) (interchain with G-Cter in SUMO1); alternate. Residue Lys-156 forms a Glycyl lysine isopeptide (Lys-Gly) (interchain with G-Cter in SUMO2); alternate linkage. Glycyl lysine isopeptide (Lys-Gly) (interchain with G-Cter in SUMO2) cross-links involve residues Lys-175, Lys-190, and Lys-290. A Phosphoserine modification is found at Ser-307. Lys-316 participates in a covalent cross-link: Glycyl lysine isopeptide (Lys-Gly) (interchain with G-Cter in SUMO1); alternate. A Glycyl lysine isopeptide (Lys-Gly) (interchain with G-Cter in SUMO2); alternate cross-link involves residue Lys-316. Lys-372 is covalently cross-linked (Glycyl lysine isopeptide (Lys-Gly) (interchain with G-Cter in SUMO2)). Lys-374 participates in a covalent cross-link: Glycyl lysine isopeptide (Lys-Gly) (interchain with G-Cter in SUMO1); alternate. Lys-374 is covalently cross-linked (Glycyl lysine isopeptide (Lys-Gly) (interchain with G-Cter in SUMO2); alternate). 2 consecutive C2H2-type zinc fingers follow at residues His-382–His-404 and Phe-410–His-432. A Glycyl lysine isopeptide (Lys-Gly) (interchain with G-Cter in SUMO2) cross-link involves residue Lys-436. Over residues Val-483–Lys-496 the composition is skewed to polar residues. Positions Val-483 to Ser-546 are disordered. Thr-541 carries the post-translational modification Phosphothreonine. Residue Lys-550 forms a Glycyl lysine isopeptide (Lys-Gly) (interchain with G-Cter in SUMO2) linkage. 2 consecutive C2H2-type zinc fingers follow at residues Asn-566–His-588 and Phe-594–His-616. Residues Lys-597 and Lys-623 each participate in a glycyl lysine isopeptide (Lys-Gly) (interchain with G-Cter in SUMO2) cross-link. The C2H2-type 6 zinc finger occupies His-626–His-648. Disordered regions lie at residues Glu-694–Ser-714, Val-736–Ser-776, and Leu-788–Thr-828. Residues Ser-698–Val-708 are compositionally biased toward low complexity. Polar residues-rich tracts occupy residues Leu-743–Ser-776 and Leu-788–Ser-797. Phosphoserine occurs at positions 776 and 789. A compositionally biased stretch (basic and acidic residues) spans Glu-810–Gly-821. Lys-838 participates in a covalent cross-link: Glycyl lysine isopeptide (Lys-Gly) (interchain with G-Cter in SUMO1); alternate. Lys-838 participates in a covalent cross-link: Glycyl lysine isopeptide (Lys-Gly) (interchain with G-Cter in SUMO2); alternate. At Ser-852 the chain carries Phosphoserine. The segment at His-870–His-892 adopts a C2H2-type 7 zinc-finger fold. Residue Lys-896 forms a Glycyl lysine isopeptide (Lys-Gly) (interchain with G-Cter in SUMO2) linkage. The segment at Phe-898–His-920 adopts a C2H2-type 8 zinc-finger fold. Glycyl lysine isopeptide (Lys-Gly) (interchain with G-Cter in SUMO2) cross-links involve residues Lys-932 and Lys-947. Positions Gly-1018–His-1039 are disordered. A Phosphoserine modification is found at Ser-1019.

The protein belongs to the sal C2H2-type zinc-finger protein family. Interacts with POU5F1/OCT4. Interacts with NANOG. Interacts with BEND3. Interacts with NSD2 (via PHD-type zinc fingers 1, 2 and 3). Interacts with NRBP1. Isoform SALL4B exists primarily as a ubiquitinated form. In terms of processing, sumoylation with both SUMO1 and SUMO2 regulates the stability, subcellular localization, transcriptional activity, and may reduce interaction with POU5F1/OCT4. In terms of tissue distribution, expressed in testis. Constitutively expressed in acute myeloid leukemia (AML).

The protein localises to the cytoplasm. The protein resides in the nucleus. Functionally, transcription factor with a key role in the maintenance and self-renewal of embryonic and hematopoietic stem cells. The sequence is that of Sal-like protein 4 (SALL4) from Homo sapiens (Human).